A 71-amino-acid polypeptide reads, in one-letter code: Protein MTH_1184 (71 aa).

The protein is Protein MTH_1184 of Methanothermobacter thermautotrophicus (strain ATCC 29096 / DSM 1053 / JCM 10044 / NBRC 100330 / Delta H) (Methanobacterium thermoautotrophicum).